We begin with the raw amino-acid sequence, 116 residues long: Large ribosomal subunit protein uL18 (116 aa).

Belongs to the universal ribosomal protein uL18 family. Part of the 50S ribosomal subunit; part of the 5S rRNA/L5/L18/L25 subcomplex. Contacts the 5S and 23S rRNAs.

This is one of the proteins that bind and probably mediate the attachment of the 5S RNA into the large ribosomal subunit, where it forms part of the central protuberance. The chain is Large ribosomal subunit protein uL18 from Acinetobacter baylyi (strain ATCC 33305 / BD413 / ADP1).